We begin with the raw amino-acid sequence, 306 residues long: Manganese transport system membrane protein MntB (306 aa).

At 1–25 (MNQLVVAFPFWHWLVEPLQYEFLIR) the chain is on the periplasmic side. A helical transmembrane segment spans residues 26–46 (AIWVSAFVGLVCAVLSCYITL). At 47–48 (KG) the chain is on the cytoplasmic side. A helical membrane pass occupies residues 49–69 (WSLMGDAISHAVVPGVVLAYA). Over 70–71 (LN) the chain is Periplasmic. A helical transmembrane segment spans residues 72–92 (IPFAIGAFTFGFGATVAIGYV). Residues 93-101 (KSKTRLKED) are Cytoplasmic-facing. The helical transmembrane segment at 102-122 (AVIGIVFTGFFALGLVLVTKI) threads the bilayer. Residues 123–141 (PSNVDLFHILFGNVLGISQ) are Periplasmic-facing. The chain crosses the membrane as a helical span at residues 142–162 (QDIIQTLIAGSITLIVILLRR). Residues 163-179 (KDLLLFCFDPNHAKAIG) are Cytoplasmic-facing. Residues 180–200 (LRTQVMYYTLLSVLALTIVAA) form a helical membrane-spanning segment. Residues 201-202 (LQ) lie on the Periplasmic side of the membrane. The chain crosses the membrane as a helical span at residues 203–223 (TAGIILVISMLVTPGSIGYLL). Residues 224-228 (SDRFD) are Cytoplasmic-facing. Residues 229 to 249 (HMLWYSVVSSVLSCVLGTYLS) form a helical membrane-spanning segment. Residues 250 to 255 (YHFDVS) are Periplasmic-facing. A helical membrane pass occupies residues 256–276 (TGGMIVVILTTLFVIAMIGAP). The Cytoplasmic segment spans residues 277–306 (KYGILAQEWRKRSGPNPEDDENQTVVVDQV).

Belongs to the ABC-3 integral membrane protein family.

Its subcellular location is the cell membrane. Functionally, part of an ATP-driven transport system for manganese. The polypeptide is Manganese transport system membrane protein MntB (mntB) (Synechocystis sp. (strain ATCC 27184 / PCC 6803 / Kazusa)).